The primary structure comprises 512 residues: ATP synthase subunit alpha (512 aa).

Position 169-176 (169-176 (GDRQTGKT)) interacts with ATP.

Belongs to the ATPase alpha/beta chains family. In terms of assembly, F-type ATPases have 2 components, CF(1) - the catalytic core - and CF(0) - the membrane proton channel. CF(1) has five subunits: alpha(3), beta(3), gamma(1), delta(1), epsilon(1). CF(0) has three main subunits: a(1), b(2) and c(9-12). The alpha and beta chains form an alternating ring which encloses part of the gamma chain. CF(1) is attached to CF(0) by a central stalk formed by the gamma and epsilon chains, while a peripheral stalk is formed by the delta and b chains.

It is found in the cell inner membrane. It catalyses the reaction ATP + H2O + 4 H(+)(in) = ADP + phosphate + 5 H(+)(out). Functionally, produces ATP from ADP in the presence of a proton gradient across the membrane. The alpha chain is a regulatory subunit. This Aromatoleum aromaticum (strain DSM 19018 / LMG 30748 / EbN1) (Azoarcus sp. (strain EbN1)) protein is ATP synthase subunit alpha.